The chain runs to 357 residues: Malonyl CoA reductase (NADP) (357 aa).

Position 13 to 16 (13 to 16 (TGLV)) interacts with NADP(+). Cys150 serves as the catalytic Acyl-thioester intermediate. 180-181 (SG) serves as a coordination point for NADP(+). Residue His245 is the Proton acceptor of the active site. 332 to 333 (NT) contacts NADP(+).

It belongs to the aspartate-semialdehyde dehydrogenase family. In terms of assembly, homotetramer.

It carries out the reaction 3-oxopropanoate + NADP(+) + CoA = malonyl-CoA + NADPH + H(+). Functionally, catalyzes the reduction of malonyl-CoA to malonate semialdehyde, a key step in the 3-hydroxypropanoate and the 3-hydroxypropanoate/4-hydroxybutyrate cycles. This is Malonyl CoA reductase (NADP) from Metallosphaera sedula (strain ATCC 51363 / DSM 5348 / JCM 9185 / NBRC 15509 / TH2).